A 360-amino-acid polypeptide reads, in one-letter code: Codeine O-demethylase (360 aa).

The 101-residue stretch at 211–311 (GLQTMRMNYY…RLSIATFHDS (101 aa)) folds into the Fe2OG dioxygenase domain. Tyr220 lines the 2-oxoglutarate pocket. Residues His235, Asp237, and His292 each contribute to the Fe cation site. Residues Arg302 and Ser304 each contribute to the 2-oxoglutarate site.

Belongs to the iron/ascorbate-dependent oxidoreductase family. L-ascorbate is required as a cofactor. The cofactor is Fe cation. Mainly expressed in stems, capsules and leaves and, to a lower extent, in roots.

The enzyme catalyses codeine + 2-oxoglutarate + O2 = morphine + formaldehyde + succinate + CO2. It carries out the reaction thebaine + 2-oxoglutarate + O2 = oripavine + formaldehyde + succinate + CO2. It catalyses the reaction (S)-scoulerine + 2-oxoglutarate + O2 = (S)-3-O-demethylscoulerine + formaldehyde + succinate + CO2. The catalysed reaction is thebaine + 2-oxoglutarate + O2 = neopinone + formaldehyde + succinate + CO2. The enzyme catalyses (S)-reticuline + 2-oxoglutarate + O2 = (S)-6-O-demethylreticuline + formaldehyde + succinate + CO2. It carries out the reaction (S)-tetrahydropalmatine + S-adenosyl-L-methionine = (S)-cis-N-methyltetrahydropalmatine + S-adenosyl-L-homocysteine. Its pathway is alkaloid biosynthesis; morphine biosynthesis. Its activity is regulated as follows. Moderate substrate inhibition. Not inhibited in vitro by acylcyclohexanediones. Functionally, non-heme dioxygenase involved in biosynthesis of morphinan-type benzylisoquinoline and opiate alkaloids natural products. Mediates the conversion of codeine to morphine. Also catalyzes, with lower efficiency, the 3-O-demethylation of thebaine to oripavine and of (S)-scoulerine to 3-O-demethylscoulerine. Supports, with a lower turnover, the conversion of codeinone to morphinone, of thebaine to neopinone, and of neopine to neomorphine. Supports dealkylation reactions such as O,O-demethylenation in the metabolism of protopine, benzo[c]phenanthridine, and rhoeadine alkaloids; cleaves a methylenedioxy bridge leaving two hydroxyl groups. Catalyzes the O,O-demethylenation of methylenedioxy bridges on protopine alkaloids such as allocryptopine, cryptopine and protopine. No activity with (S)-reticuline, salutaridine, papaverine, (S)-corytuberine, oripavine, pavine or noscapine. The polypeptide is Codeine O-demethylase (Papaver somniferum (Opium poppy)).